A 465-amino-acid polypeptide reads, in one-letter code: Pancreatic triacylglycerol lipase (465 aa).

An N-terminal signal peptide occupies residues 1–16; sequence MLLLWILSLFLETVAG. 2 disulfide bridges follow: cysteine 20–cysteine 26 and cysteine 107–cysteine 118. Catalysis depends on serine 169, which acts as the Nucleophile. Aspartate 193 serves as the catalytic Charge relay system. Ca(2+) contacts are provided by glutamate 204, arginine 207, aspartate 209, and aspartate 212. Cysteine 254 and cysteine 278 are disulfide-bonded. Catalysis depends on histidine 280, which acts as the Charge relay system. 2 cysteine pairs are disulfide-bonded: cysteine 302–cysteine 313 and cysteine 316–cysteine 321. N-linked (GlcNAc...) asparagine glycans are attached at residues asparagine 351, asparagine 398, and asparagine 425. The 111-residue stretch at 355-465 folds into the PLAT domain; sequence WRYRIAVTLS…EEVLLTLQPC (111 aa). An intrachain disulfide couples cysteine 449 to cysteine 465.

This sequence belongs to the AB hydrolase superfamily. Lipase family. As to quaternary structure, forms a 1:1 stoichiometric complex with (pro)colipase/CLPS.

It is found in the secreted. The catalysed reaction is a triacylglycerol + H2O = a diacylglycerol + a fatty acid + H(+). It catalyses the reaction 1,2,3-tributanoylglycerol + H2O = dibutanoylglycerol + butanoate + H(+). It carries out the reaction 1,2,3-tri-(9Z-octadecenoyl)-glycerol + H2O = di-(9Z)-octadecenoylglycerol + (9Z)-octadecenoate + H(+). The enzyme catalyses all-trans-retinyl hexadecanoate + H2O = all-trans-retinol + hexadecanoate + H(+). The catalysed reaction is 1,2-di-(9Z-octadecenoyl)-glycerol + H2O = (9Z-octadecenoyl)-glycerol + (9Z)-octadecenoate + H(+). Inhibited by bile salts, is reactivated by (pro)colipase/CLPS. Functionally, plays an important role in fat metabolism. It preferentially splits the esters of long-chain fatty acids at positions 1 and 3, producing mainly 2-monoacylglycerol and free fatty acids, and shows considerably higher activity against insoluble emulsified substrates than against soluble ones. The polypeptide is Pancreatic triacylglycerol lipase (PNLIP) (Cavia porcellus (Guinea pig)).